Here is a 150-residue protein sequence, read N- to C-terminus: MFDVQIFDEKKFLSKKDISLIKKVSKFIFIEEKLKNKIIFELHIIDNNESQKINKQYRNKDYPTDVISFSFWEEGLLKTALLGEIYLSYEKVVSQAEEFKHSFERELGFLVSHGIYHLLGYDHEEEDEAKIMFGKQYQVLKLCGLGSVND.

Positions 113, 117, and 123 each coordinate Zn(2+).

The protein belongs to the endoribonuclease YbeY family. Zn(2+) serves as cofactor.

It is found in the cytoplasm. Single strand-specific metallo-endoribonuclease involved in late-stage 70S ribosome quality control and in maturation of the 3' terminus of the 16S rRNA. This is Endoribonuclease YbeY from Malacoplasma penetrans (strain HF-2) (Mycoplasma penetrans).